We begin with the raw amino-acid sequence, 158 residues long: Transcription elongation factor GreA (158 aa).

Over residues 24-43 the composition is skewed to basic and acidic residues; it reads DVERPKASEAIGEARDKGDL. The segment at 24 to 47 is disordered; it reads DVERPKASEAIGEARDKGDLSENA. Residues 48–68 are a coiled coil; it reads EYDAAKEAQGLLEMKISKMEE.

The protein belongs to the GreA/GreB family.

Its function is as follows. Necessary for efficient RNA polymerase transcription elongation past template-encoded arresting sites. The arresting sites in DNA have the property of trapping a certain fraction of elongating RNA polymerases that pass through, resulting in locked ternary complexes. Cleavage of the nascent transcript by cleavage factors such as GreA or GreB allows the resumption of elongation from the new 3'terminus. GreA releases sequences of 2 to 3 nucleotides. This Christiangramia forsetii (strain DSM 17595 / CGMCC 1.15422 / KT0803) (Gramella forsetii) protein is Transcription elongation factor GreA.